We begin with the raw amino-acid sequence, 512 residues long: Glutamyl-tRNA(Gln) amidotransferase subunit A (512 aa).

Residues lysine 82 and serine 157 each act as charge relay system in the active site. Serine 181 serves as the catalytic Acyl-ester intermediate.

The protein belongs to the amidase family. GatA subfamily. In terms of assembly, heterotrimer of A, B and C subunits.

It catalyses the reaction L-glutamyl-tRNA(Gln) + L-glutamine + ATP + H2O = L-glutaminyl-tRNA(Gln) + L-glutamate + ADP + phosphate + H(+). Functionally, allows the formation of correctly charged Gln-tRNA(Gln) through the transamidation of misacylated Glu-tRNA(Gln) in organisms which lack glutaminyl-tRNA synthetase. The reaction takes place in the presence of glutamine and ATP through an activated gamma-phospho-Glu-tRNA(Gln). The sequence is that of Glutamyl-tRNA(Gln) amidotransferase subunit A from Bordetella bronchiseptica (strain ATCC BAA-588 / NCTC 13252 / RB50) (Alcaligenes bronchisepticus).